Reading from the N-terminus, the 341-residue chain is DnaJ homolog subfamily C member 22 (341 aa).

One can recognise a TM2 domain in the interval 3–50; the sequence is KGLLVTYALWAVGGPAGLHHLYLGRDSHALLWMLTLGGGGLGWLWEFW. The next 7 membrane-spanning stretches (helical) occupy residues 5 to 25, 30 to 50, 81 to 101, 105 to 125, 135 to 155, 185 to 205, and 218 to 238; these read LLVT…HLYL, HALL…WEFW, FAAQ…SLSS, FYIV…AAVG, LGAA…ILPI, LGLA…CNTA, and FLNW…VLLL. One can recognise a J domain in the interval 277–341; the sequence is LAYQVLGLSE…QPRKPRGSRR (65 aa).

It localises to the membrane. Its function is as follows. May function as a co-chaperone. This chain is DnaJ homolog subfamily C member 22 (DNAJC22), found in Pongo abelii (Sumatran orangutan).